Reading from the N-terminus, the 248-residue chain is Putative amino-acid ABC transporter-binding protein PatH (248 aa).

An N-terminal signal peptide occupies residues 1 to 21; it reads MKNWIKVAVAAIALSAATVQA.

This sequence belongs to the bacterial solute-binding protein 3 family.

It localises to the periplasm. In terms of biological role, probably part of a binding-protein-dependent transport system for an amino acid. This chain is Putative amino-acid ABC transporter-binding protein PatH (patH), found in Vibrio harveyi (Beneckea harveyi).